Reading from the N-terminus, the 170-residue chain is Peptide deformylase (170 aa).

Residues C94 and H136 each coordinate Fe cation. The active site involves E137. H140 is a Fe cation binding site.

This sequence belongs to the polypeptide deformylase family. The cofactor is Fe(2+).

The catalysed reaction is N-terminal N-formyl-L-methionyl-[peptide] + H2O = N-terminal L-methionyl-[peptide] + formate. In terms of biological role, removes the formyl group from the N-terminal Met of newly synthesized proteins. Requires at least a dipeptide for an efficient rate of reaction. N-terminal L-methionine is a prerequisite for activity but the enzyme has broad specificity at other positions. The sequence is that of Peptide deformylase from Xylella fastidiosa (strain M12).